A 342-amino-acid polypeptide reads, in one-letter code: L-lysine 2,3-aminomutase (342 aa).

One can recognise a Radical SAM core domain in the interval 106-329 (HKYQNRALLL…PRLAREIGGE (224 aa)). [4Fe-4S] cluster is bound by residues Cys120, Cys124, and Cys127. At Lys332 the chain carries N6-(pyridoxal phosphate)lysine.

The protein belongs to the radical SAM superfamily. KamA family. [4Fe-4S] cluster is required as a cofactor. The cofactor is pyridoxal 5'-phosphate.

The enzyme catalyses L-lysine = D-beta-lysine. In terms of biological role, with EpmA is involved in the beta-lysylation step of the post-translational modification of translation elongation factor P (EF-P) on 'Lys-34'. EpmB appears to act before EpmA. Displays lysine 2,3-aminomutase activity, producing (R)-beta-lysine from (S)-alpha-lysine (L-lysine). This Salmonella typhimurium (strain LT2 / SGSC1412 / ATCC 700720) protein is L-lysine 2,3-aminomutase (epmB).